The sequence spans 501 residues: Tegument protein US24 (501 aa).

This sequence belongs to the herpesviridae US22 family.

The protein resides in the virion tegument. This Human cytomegalovirus (strain Merlin) (HHV-5) protein is Tegument protein US24 (US24).